We begin with the raw amino-acid sequence, 260 residues long: Circadian clock-controlled protein daywake (260 aa).

The signal sequence occupies residues 1-25 (MQLTSASVCLLWMGLLSWVSHRIDA).

It belongs to the TO family.

Component of the circadian clock or downstream effector of clock function. Required for suppressing daytime sleep (siesta) under ambient environmental temperatures. Part of a heat avoidance mechanism that modulates daytime sleep behavior under different environmental temperatures to minimize the risk of heat exposure. Under cooler ambient temperatures, suppresses daytime sleep (siesta) and thus allows for longer periods of daytime activity. This chain is Circadian clock-controlled protein daywake, found in Drosophila yakuba (Fruit fly).